The chain runs to 156 residues: Snaclec A3 (156 aa).

The first 23 residues, 1-23, serve as a signal peptide directing secretion; that stretch reads MGRSISVSFGLLVVFLSLSGTGA. Disulfide bonds link C27-C38, C55-C154, and C129-C146. A C-type lectin domain is found at 34–155; it reads HEGHCYKVFN…CGQPYRFTCE (122 aa).

The protein belongs to the snaclec family. Heterodimer; disulfide-linked. Expressed by the venom gland.

The protein resides in the secreted. Functionally, interferes with one step of hemostasis (modulation of platelet aggregation, or coagulation cascade, for example). This is Snaclec A3 from Macrovipera lebetinus (Levantine viper).